The chain runs to 363 residues: 3-dehydroquinate synthase (363 aa).

Residues 75–80, 109–113, 133–134, Lys146, Lys155, and 173–176 each bind NAD(+); these read DAEEGK, GAVTD, TS, and TLQT. Zn(2+) contacts are provided by Glu188, His251, and His267.

It belongs to the sugar phosphate cyclases superfamily. Dehydroquinate synthase family. The cofactor is Co(2+). Zn(2+) serves as cofactor. NAD(+) is required as a cofactor.

The protein resides in the cytoplasm. It carries out the reaction 7-phospho-2-dehydro-3-deoxy-D-arabino-heptonate = 3-dehydroquinate + phosphate. It functions in the pathway metabolic intermediate biosynthesis; chorismate biosynthesis; chorismate from D-erythrose 4-phosphate and phosphoenolpyruvate: step 2/7. In terms of biological role, catalyzes the conversion of 3-deoxy-D-arabino-heptulosonate 7-phosphate (DAHP) to dehydroquinate (DHQ). This is 3-dehydroquinate synthase from Paenarthrobacter aurescens (strain TC1).